Consider the following 215-residue polypeptide: MTQTLADMRRDYTRDGLTEAQSPQEPFALFHTWFEEAVKTEQPPVEANAMTLATVDEEGRPHCRVLLLKGLDAQGFTFFTNYESAKGRQLAAHPFAAMTFFWPALERQVRIEGRVEKVSAQESDAYYQVRPLGSRLGAWASPQSRVIADRDELEGLIRQTEQRFADTQPHCPEHWGGYRLLPERIEFWQGRSSRLHDRLNYRLINAKWARERLAP.

Substrate-binding positions include 9-12 (RRDY) and lysine 69. FMN contacts are provided by residues 64 to 69 (RVLLLK), 79 to 80 (FT), lysine 86, and glutamine 108. Residues tyrosine 126, arginine 130, and serine 134 each contribute to the substrate site. Residues 143–144 (QS) and tryptophan 188 contribute to the FMN site. 194 to 196 (RLH) contributes to the substrate binding site. Arginine 198 provides a ligand contact to FMN.

This sequence belongs to the pyridoxamine 5'-phosphate oxidase family. As to quaternary structure, homodimer. FMN is required as a cofactor.

It carries out the reaction pyridoxamine 5'-phosphate + O2 + H2O = pyridoxal 5'-phosphate + H2O2 + NH4(+). The catalysed reaction is pyridoxine 5'-phosphate + O2 = pyridoxal 5'-phosphate + H2O2. It functions in the pathway cofactor metabolism; pyridoxal 5'-phosphate salvage; pyridoxal 5'-phosphate from pyridoxamine 5'-phosphate: step 1/1. It participates in cofactor metabolism; pyridoxal 5'-phosphate salvage; pyridoxal 5'-phosphate from pyridoxine 5'-phosphate: step 1/1. Functionally, catalyzes the oxidation of either pyridoxine 5'-phosphate (PNP) or pyridoxamine 5'-phosphate (PMP) into pyridoxal 5'-phosphate (PLP). This chain is Pyridoxine/pyridoxamine 5'-phosphate oxidase, found in Pseudomonas syringae pv. tomato (strain ATCC BAA-871 / DC3000).